We begin with the raw amino-acid sequence, 539 residues long: Chaperone Ric-8A (539 aa).

The interval 506-539 is disordered; it reads PMGVTSDGRLGPLDEAAQKMLQRQESSDLDSDSD.

Belongs to the synembryn family.

Its subcellular location is the cytoplasm. It is found in the cell cortex. Chaperone that specifically binds and folds nascent G alpha proteins prior to G protein heterotrimer formation, promoting their stability and activity: folds GNAI1, GNAO1, GNA13 and GNAQ. Does not fold G(s) G-alpha proteins GNAS nor GNAL. Also acts as a guanine nucleotide exchange factor (GEF) for G alpha proteins by stimulating exchange of bound GDP for free GTP. This is Chaperone Ric-8A (ric8a) from Xenopus laevis (African clawed frog).